The following is a 127-amino-acid chain: Holo-[acyl-carrier-protein] synthase (127 aa).

Asp-9 and Glu-58 together coordinate Mg(2+).

It belongs to the P-Pant transferase superfamily. AcpS family. Mg(2+) serves as cofactor.

Its subcellular location is the cytoplasm. The enzyme catalyses apo-[ACP] + CoA = holo-[ACP] + adenosine 3',5'-bisphosphate + H(+). In terms of biological role, transfers the 4'-phosphopantetheine moiety from coenzyme A to a Ser of acyl-carrier-protein. This is Holo-[acyl-carrier-protein] synthase from Shewanella oneidensis (strain ATCC 700550 / JCM 31522 / CIP 106686 / LMG 19005 / NCIMB 14063 / MR-1).